Consider the following 80-residue polypeptide: Acyl carrier protein (80 aa).

Residues 3-78 (DDTFSRIQSI…QVLEYIEAES (76 aa)) enclose the Carrier domain. Ser38 is subject to O-(pantetheine 4'-phosphoryl)serine.

It belongs to the acyl carrier protein (ACP) family. Post-translationally, 4'-phosphopantetheine is transferred from CoA to a specific serine of apo-ACP by AcpS. This modification is essential for activity because fatty acids are bound in thioester linkage to the sulfhydryl of the prosthetic group.

The protein resides in the plastid. It localises to the chloroplast. It functions in the pathway lipid metabolism; fatty acid biosynthesis. Its function is as follows. Carrier of the growing fatty acid chain in fatty acid biosynthesis. The protein is Acyl carrier protein of Trieres chinensis (Marine centric diatom).